We begin with the raw amino-acid sequence, 248 residues long: Granzyme-like protein 1 (248 aa).

The signal sequence occupies residues 1–18 (MNLLLLLLTVSLAPTTEA). The propeptide at 19–20 (AE) is activation peptide. One can recognise a Peptidase S1 domain in the interval 21–246 (IIGGHEADPH…FLSWIEETMK (226 aa)). A disulfide bridge connects residues Cys-50 and Cys-66. His-65 acts as the Charge relay system in catalysis. The N-linked (GlcNAc...) asparagine glycan is linked to Asn-72. The Charge relay system role is filled by Asp-109. 2 disulfides stabilise this stretch: Cys-143-Cys-210 and Cys-174-Cys-189. The active-site Charge relay system is the Ser-204.

The protein belongs to the peptidase S1 family. Granzyme subfamily. As to expression, duodenum.

Its function is as follows. This enzyme is necessary for target cell lysis in cell-mediated immune responses. The polypeptide is Granzyme-like protein 1 (Rattus norvegicus (Rat)).